The following is a 320-amino-acid chain: MSLITIINPLTYIVPILIAVAFLTLTERKILGYMQLRKGPNITGPYGLLQPIADGLKLFIKEPVRPLNTSPILLILSPVLALTMAMLIWTPIPMPYTLANLNLGFLSILAISSMAVNSILWAGWASNSKYALIGSLRAVAQTISYEVTLGIILLSILILTGGFTMQLLTATQKHIWLLATSWPLMMMWFISTLAETNRAPFDLTEGESELVSGFNVEYAGGPFALFFLAEYANIISMNLLTCILFINPGPTQHPELFLINLITKTMILTLTFLWIRASYPRFRYDQLMHLLWKQFLPLTMALCLLHVSLLISISGLPPLT.

The next 8 membrane-spanning stretches (helical) occupy residues 3–23 (LITIINPLTYIVPILIAVAFL), 72–92 (ILLILSPVLALTMAMLIWTPI), 103–123 (LGFLSILAISSMAVNSILWAG), 147–167 (VTLGIILLSILILTGGFTMQL), 174–194 (HIWLLATSWPLMMMWFISTLA), 226–246 (FFLAEYANIISMNLLTCILFI), 255–275 (ELFLINLITKTMILTLTFLWI), and 295–315 (FLPLTMALCLLHVSLLISISG).

Belongs to the complex I subunit 1 family.

The protein resides in the mitochondrion inner membrane. It catalyses the reaction a ubiquinone + NADH + 5 H(+)(in) = a ubiquinol + NAD(+) + 4 H(+)(out). Functionally, core subunit of the mitochondrial membrane respiratory chain NADH dehydrogenase (Complex I) that is believed to belong to the minimal assembly required for catalysis. Complex I functions in the transfer of electrons from NADH to the respiratory chain. The immediate electron acceptor for the enzyme is believed to be ubiquinone. This chain is NADH-ubiquinone oxidoreductase chain 1 (MT-ND1), found in Varanus jobiensis (Peach throat monitor).